Here is a 464-residue protein sequence, read N- to C-terminus: Argininosuccinate lyase (464 aa).

Belongs to the lyase 1 family. Argininosuccinate lyase subfamily.

Its subcellular location is the cytoplasm. It carries out the reaction 2-(N(omega)-L-arginino)succinate = fumarate + L-arginine. Its pathway is amino-acid biosynthesis; L-arginine biosynthesis; L-arginine from L-ornithine and carbamoyl phosphate: step 3/3. The sequence is that of Argininosuccinate lyase from Pseudomonas syringae pv. tomato (strain ATCC BAA-871 / DC3000).